Reading from the N-terminus, the 160-residue chain is 6-hydroxypseudooxynicotine dehydrogenase complex subunit beta (160 aa).

The 2Fe-2S ferredoxin-type domain occupies 4-80 (FRLTVEVNGV…NSRIETVESL (77 aa)). 8 residues coordinate [2Fe-2S] cluster: cysteine 42, cysteine 47, cysteine 50, cysteine 62, cysteine 101, cysteine 104, cysteine 137, and cysteine 139.

As to quaternary structure, heterohexamer of 2 alpha (kdhA), 2 beta (kdhB) and 2 gamma (kdhC) subunit. Dimer of heterotrimers. [2Fe-2S] cluster is required as a cofactor.

It catalyses the reaction 6-hydroxypseudooxynicotine + A + H2O = 2,6-dihydroxypseudooxynicotine + AH2. The protein operates within alkaloid degradation; nicotine degradation. Molybdo-flavoprotein enzyme complex involved in nicotine degradation. The subunit gamma (large subunit) contains the substrate-binding sites, the subunit alpha (medium subunit) binds FAD and the subunit beta (small subunit) has a 2Fe-2S ferredoxin-type domain which binds 2 2Fe-2S clusters. In Paenarthrobacter nicotinovorans (Arthrobacter nicotinovorans), this protein is 6-hydroxypseudooxynicotine dehydrogenase complex subunit beta (kdhB).